Consider the following 201-residue polypeptide: Large ribosomal subunit protein uL4 (201 aa).

The segment at 51–73 is disordered; sequence EVTGSGKKPWRQKGTGRARAGSV.

This sequence belongs to the universal ribosomal protein uL4 family. Part of the 50S ribosomal subunit.

Functionally, one of the primary rRNA binding proteins, this protein initially binds near the 5'-end of the 23S rRNA. It is important during the early stages of 50S assembly. It makes multiple contacts with different domains of the 23S rRNA in the assembled 50S subunit and ribosome. Forms part of the polypeptide exit tunnel. The protein is Large ribosomal subunit protein uL4 of Erwinia tasmaniensis (strain DSM 17950 / CFBP 7177 / CIP 109463 / NCPPB 4357 / Et1/99).